A 587-amino-acid polypeptide reads, in one-letter code: Nucleoporin ndc-1 (587 aa).

Residues 1 to 79 (MMGENSSAYT…FHSEIDVRKK (79 aa)) lie on the Cytoplasmic side of the membrane. The tract at residues 32-55 (ASTSATSSPNLRKSPNRGFSSPRA) is disordered. The helical transmembrane segment at 80–100 (LASFVCGAAVALSFIVTVSIL) threads the bilayer. At 101–121 (KLSIWAPFSSVQDSLTWWLYP) the chain is on the perinuclear space side. A helical membrane pass occupies residues 122–142 (TSWPVTLFIWLSSVAWTFLII). Topologically, residues 143–161 (HQFCTVTQVPRIPITDTYA) are cytoplasmic. The chain crosses the membrane as a helical span at residues 162–182 (WAGAALEFVHRLIFVYTAFTV). Residues 183–187 (SESSF) are Perinuclear space-facing. Residues 188–208 (FEDFAWIAIAFSVAISSALVI) traverse the membrane as a helical segment. The Cytoplasmic segment spans residues 209–255 (FRSDFHLNFSNVQVNSFKTLIDFAKSLPYGSLAETSGVDAAIAYTAA). A helical transmembrane segment spans residues 256 to 276 (MALTVFGSPLLWGFSAWWLLI). Residues 277 to 281 (NIQFH) lie on the Perinuclear space side of the membrane. Residues 282 to 302 (LVLFGVCFAQQFFAKIFMKIV) form a helical membrane-spanning segment. Over 303–587 (NQIVMKPMKF…TIKLVCAEEI (285 aa)) the chain is Cytoplasmic.

It belongs to the NDC1 family.

The protein localises to the nucleus. It localises to the nuclear pore complex. Its subcellular location is the nucleus membrane. In terms of biological role, component of the nuclear pore complex (NPC), which plays a key role in de novo assembly and insertion of NPC in the nuclear envelope. This Caenorhabditis briggsae protein is Nucleoporin ndc-1 (npp-22).